The sequence spans 87 residues: uncharacterized protein (87 aa).

The protein belongs to the YlmC/YmxH family.

This is an uncharacterized protein from Clostridium acetobutylicum (strain ATCC 824 / DSM 792 / JCM 1419 / IAM 19013 / LMG 5710 / NBRC 13948 / NRRL B-527 / VKM B-1787 / 2291 / W).